Here is a 521-residue protein sequence, read N- to C-terminus: Maturase K (521 aa).

The protein belongs to the intron maturase 2 family. MatK subfamily.

Its subcellular location is the plastid. It localises to the chloroplast. In terms of biological role, usually encoded in the trnK tRNA gene intron. Probably assists in splicing its own and other chloroplast group II introns. The chain is Maturase K from Trillium catesbaei (Catesby's trillium).